Here is a 266-residue protein sequence, read N- to C-terminus: Putative carbamate hydrolase RutD (266 aa).

Residues 14-115 enclose the AB hydrolase-1 domain; it reads PVVVLISGLG…TMLVSVNGWL (102 aa).

The protein belongs to the AB hydrolase superfamily. Hydrolase RutD family.

The enzyme catalyses carbamate + 2 H(+) = NH4(+) + CO2. Its function is as follows. Involved in pyrimidine catabolism. May facilitate the hydrolysis of carbamate, a reaction that can also occur spontaneously. The polypeptide is Putative carbamate hydrolase RutD (Shigella flexneri serotype 5b (strain 8401)).